The chain runs to 1755 residues: E3 ubiquitin-protein ligase UBR2 (1755 aa).

A2 is modified (N-acetylalanine). K94 is covalently cross-linked (Glycyl lysine isopeptide (Lys-Gly) (interchain with G-Cter in ubiquitin)). Residues H97 to L168 form a UBR-type zinc finger. Positions 99, 112, 115, 124, 127, 133, and 136 each coordinate Zn(2+). Residue F148 participates in a peptide binding. A Zn(2+)-binding site is contributed by C149. D150 serves as a coordination point for a peptide. A Zn(2+)-binding site is contributed by C151. D153 is an a peptide binding site. Residue K158 forms a Glycyl lysine isopeptide (Lys-Gly) (interchain with G-Cter in ubiquitin) linkage. C163 lines the Zn(2+) pocket. K165 participates in a covalent cross-link: Glycyl lysine isopeptide (Lys-Gly) (interchain with G-Cter in ubiquitin). Zn(2+) is bound at residue H166. Residues K248, K255, and K470 each participate in a glycyl lysine isopeptide (Lys-Gly) (interchain with G-Cter in ubiquitin) cross-link. Position 476 is a phosphoserine (S476). Residues K488, K568, K779, and K789 each participate in a glycyl lysine isopeptide (Lys-Gly) (interchain with G-Cter in ubiquitin) cross-link. Residues A1012–R1033 are disordered. Residues M1019 to R1054 are a coiled coil. The span at E1021–R1033 shows a compositional bias: basic and acidic residues. Residues C1108, C1111, C1168, H1170, H1173, C1176, C1210, and C1213 each coordinate Zn(2+). The RING-type; atypical zinc-finger motif lies at C1108–E1214. Glycyl lysine isopeptide (Lys-Gly) (interchain with G-Cter in ubiquitin) cross-links involve residues K1496, K1599, and K1689. S1694 is modified (phosphoserine). The residue at position 1697 (Y1697) is a Phosphotyrosine.

It belongs to the E3 ubiquitin-protein ligase UBR1-like family. As to quaternary structure, interacts with UBE2B; promotes the UBE2B-H2A interaction and the ubiquitination of histone H2A by UBE2B and UBR2. Interacts with RECQL4. Interacts with Tex19.1 and Tex19.2; does not lead to Tex19.1 degradation and stabilizes it. Interacts with L1RE1. Interacts with CASP8. Interacts with ATXN3. Interacts with UBE2O. Post-translationally, dephosphorylated by DUSP22 at Ser-1694 and Tyr-1697, leading to subsequent ubiquitination and proteasomal degradation. In terms of processing, 'Lys-48'-linked ubiquitinated at Lys-94, Lys-779 and Lys-1599 following DUSP22-mediated dephosphorylation of Ser-1694 and Tyr-1697 which promotes UBR2 interaction with the SCF(FBW1A) E3 ubiquitin-protein ligase complex. In terms of tissue distribution, highly expressed in skeletal muscle. Also expressed in heart, kidney and testis. Expressed in acinar cells of the pancreas. In testes, expressed primarily in spermatocytes. Expressed in cerebellum.

The protein localises to the nucleus. The protein resides in the chromosome. The catalysed reaction is S-ubiquitinyl-[E2 ubiquitin-conjugating enzyme]-L-cysteine + [acceptor protein]-L-lysine = [E2 ubiquitin-conjugating enzyme]-L-cysteine + N(6)-ubiquitinyl-[acceptor protein]-L-lysine.. It participates in protein modification; protein ubiquitination. Functionally, E3 ubiquitin-protein ligase which is a component of the N-end rule pathway. Recognizes and binds to proteins bearing specific N-terminal residues (N-degrons) that are destabilizing according to the N-end rule, leading to their ubiquitination and subsequent degradation. Recognizes both type-1 and type-2 N-degrons, containing positively charged amino acids (Arg, Lys and His) and bulky and hydrophobic amino acids, respectively. Does not ubiquitinate proteins that are acetylated at the N-terminus. In contrast, it strongly binds methylated N-degrons. Plays a critical role in chromatin inactivation and chromosome-wide transcriptional silencing during meiosis via ubiquitination of histone H2A. Binds leucine and is a negative regulator of the leucine-mTOR signaling pathway, thereby controlling cell growth. Required for spermatogenesis, promotes, with Tex19.1, SPO11-dependent recombination foci to accumulate and drive robust homologous chromosome synapsis. Polyubiquitinates LINE-1 retrotransposon encoded, LIRE1, which induces degradation, inhibiting LINE-1 retrotransposon mobilization. Catalyzes ubiquitination and degradation of the N-terminal part of NLRP1B following NLRP1B activation by pathogens and other damage-associated signals: ubiquitination promotes degradation of the N-terminal part and subsequent release of the cleaved C-terminal part of NLRP1B, which polymerizes and forms the NLRP1B inflammasome followed by host cell pyroptosis. Plays a role in T-cell receptor signaling by inducing 'Lys-63'-linked ubiquitination of lymphocyte cell-specific kinase LCK. This activity is regulated by DUSP22, which induces 'Lys-48'-linked ubiquitination of UBR2, leading to its proteasomal degradation by SCF E3 ubiquitin-protein ligase complex. This is E3 ubiquitin-protein ligase UBR2 from Mus musculus (Mouse).